The primary structure comprises 167 residues: Secretion monitor (167 aa).

Positions 1–36 (MIGILNRWRQFGRRYFWPHLLLGMVAASFGLPQASA) are cleaved as a signal peptide.

Belongs to the SecM family.

Its subcellular location is the cytoplasm. It is found in the cytosol. The protein localises to the periplasm. In terms of biological role, regulates secA expression by translational coupling of the secM secA operon. Translational pausing at a specific Pro residue 5 residues before the end of the protein may allow disruption of a mRNA repressor helix that normally suppresses secA translation initiation. This chain is Secretion monitor, found in Erwinia tasmaniensis (strain DSM 17950 / CFBP 7177 / CIP 109463 / NCPPB 4357 / Et1/99).